A 484-amino-acid polypeptide reads, in one-letter code: UDP-N-acetylmuramate--L-alanine ligase (484 aa).

125–131 (GTHGKTT) lines the ATP pocket.

The protein belongs to the MurCDEF family.

Its subcellular location is the cytoplasm. It catalyses the reaction UDP-N-acetyl-alpha-D-muramate + L-alanine + ATP = UDP-N-acetyl-alpha-D-muramoyl-L-alanine + ADP + phosphate + H(+). It functions in the pathway cell wall biogenesis; peptidoglycan biosynthesis. Functionally, cell wall formation. The protein is UDP-N-acetylmuramate--L-alanine ligase of Buchnera aphidicola subsp. Acyrthosiphon pisum (strain Tuc7).